Consider the following 299-residue polypeptide: Probable lipid kinase YegS (299 aa).

A DAGKc domain is found at 2-133 (ANFPASLLIL…IDMARVNDKT (132 aa)). ATP-binding positions include Thr-40, 66–72 (GDGTINE), and Thr-95. Mg(2+) contacts are provided by Leu-215, Asp-218, and Leu-220. Glu-271 functions as the Proton acceptor in the catalytic mechanism.

Belongs to the diacylglycerol/lipid kinase family. YegS lipid kinase subfamily. The cofactor is Mg(2+). Ca(2+) is required as a cofactor.

Its subcellular location is the cytoplasm. Probably phosphorylates lipids; the in vivo substrate is unknown. This chain is Probable lipid kinase YegS, found in Salmonella agona (strain SL483).